The primary structure comprises 423 residues: TPR repeat-containing protein YpiA (423 aa).

9 TPR repeats span residues 33–66, 67–100, 135–168, 171–204, 238–271, 272–305, 306–339, 340–373, and 374–407; these read DEDKAIAAQLYYEWGDVEKAISLISDLHDLYPNE, TELTNFYAELLIDIDEEEKALAVLETIPETDPSY, PVIDFALGELYFAQGAYAKAVQYFKTTAEEQSEI, VNVHQRLAESLSASGEFEDAIPWYEKAVDENPDP, TSLYMPLSKSYEAEGMYEEALKTAKEGIRYDEYN, KELFLYAAKMALKIGKSEEGKKLLQEALALDPGF, VEALHTLLAVYHKEEDYDQIIDLIQEVRSYGEED, PKYNWYLASAYTELEQYEEAKQSFEAAYLHYRED, and RDFLYEYASFLLEEGLQKEALPLLKKVLEMDGAN.

As to quaternary structure, interacts with the RNA polymerase core.

This Bacillus subtilis (strain 168) protein is TPR repeat-containing protein YpiA (ypiA).